We begin with the raw amino-acid sequence, 309 residues long: Tagatose-6-phosphate kinase (309 aa).

The protein belongs to the carbohydrate kinase PfkB family. LacC subfamily.

It catalyses the reaction D-tagatofuranose 6-phosphate + ATP = D-tagatofuranose 1,6-bisphosphate + ADP + H(+). It participates in carbohydrate metabolism; D-tagatose 6-phosphate degradation; D-glyceraldehyde 3-phosphate and glycerone phosphate from D-tagatose 6-phosphate: step 1/2. This Streptococcus pneumoniae (strain ATCC 700669 / Spain 23F-1) protein is Tagatose-6-phosphate kinase.